The chain runs to 344 residues: MNKRRWIAVGVACGLLLLSIIVALIPGKDKEEASNTTLTGINKIFYGSNEITEETLEEGASNKKIVKLSVNGVIADTGESNLFSREQYNHQNFLTQLKKIQEDKAVKGVLLEVNSPGGGIYESAEIAKEMAKIKKLDIPIYTAFKNTAASGGYYISAGSDKIFATEETTTGSIGVIISGLNYSGLLEKLGVTDATYKSGALKDMMSPQHKPSEEENKVIQEFVMSAYDRFVNVVAKGRNMDTNAVKELADGRIYDGNQAVENGLVDQIGYSEDALDSLKKEKKLTDATVIEYKNDTTGFASSWLGNKIAEWQGLKATTSDRVISVFEKLGFSDTPKPMYYYGGL.

Residues 6-26 form a helical membrane-spanning segment; sequence WIAVGVACGLLLLSIIVALIP. The active-site Nucleophile is Ser150. Residue Lys202 is the Proton donor/acceptor of the active site.

Belongs to the peptidase S49 family.

The protein localises to the cell membrane. Its function is as follows. Digestion of the cleaved signal peptides. The protein is Putative signal peptide peptidase SppA (sppA) of Enterococcus faecium (Streptococcus faecium).